The chain runs to 311 residues: MNILTKIDDFVDQAGADKVGADHGPSEENGSSHPLFDNAPRSVSFNKLRKRLLRNVRQAFEDFGMLNGQKRWLVGLSGGKDSYGLLALLLDLKWRGLLPVELVACNLDQGQPNFPKHVLPEYLAKIGVAHRIEYRDTYSIVKEKVPSGGTYCSLCSRLRRGNLYRIAREEGCDALLLGHHREDILETFFMNFFHGGRLAGMPAKLLNDEGDLMVMRPLAYCAEEDMAKFAAAMEFPIIPCDLCGSQDGLQRNAMKDMLADIERRMPGRKDVMLRALAHVNPSHLLDPKLFDFSALAVTGASPEERREASPP.

The tract at residues 18–38 (KVGADHGPSEENGSSHPLFDN) is disordered. Residues 77-82 (SGGKDS) carry the PP-loop motif motif. Residues cysteine 152, cysteine 155, and cysteine 243 each contribute to the [4Fe-4S] cluster site.

This sequence belongs to the TtcA family. As to quaternary structure, homodimer. Requires Mg(2+) as cofactor. The cofactor is [4Fe-4S] cluster.

The protein resides in the cytoplasm. The catalysed reaction is cytidine(32) in tRNA + S-sulfanyl-L-cysteinyl-[cysteine desulfurase] + AH2 + ATP = 2-thiocytidine(32) in tRNA + L-cysteinyl-[cysteine desulfurase] + A + AMP + diphosphate + H(+). It participates in tRNA modification. In terms of biological role, catalyzes the ATP-dependent 2-thiolation of cytidine in position 32 of tRNA, to form 2-thiocytidine (s(2)C32). The sulfur atoms are provided by the cysteine/cysteine desulfurase (IscS) system. This is tRNA-cytidine(32) 2-sulfurtransferase from Agrobacterium fabrum (strain C58 / ATCC 33970) (Agrobacterium tumefaciens (strain C58)).